The primary structure comprises 521 residues: Type-1 glutamine synthetase 2 (521 aa).

The GS beta-grasp domain maps to 76–176 (NQIKISKSPF…FLMDFIGTNG (101 aa)). Positions 183-521 (PRSTLKKVIK…WELERYLEII (339 aa)) constitute a GS catalytic domain.

This sequence belongs to the glutamine synthetase family.

The enzyme catalyses L-glutamate + NH4(+) + ATP = L-glutamine + ADP + phosphate + H(+). In Dictyostelium discoideum (Social amoeba), this protein is Type-1 glutamine synthetase 2 (glnA2).